The primary structure comprises 997 residues: Protein argonaute 5 (997 aa).

2 stretches are compositionally biased toward gly residues: residues 1–16 and 43–59; these read MSNRGGGGHGGASRGR and GGRGGSVSAGRGRGNVG. Residues 1 to 144 are disordered; sequence MSNRGGGGHG…TSLPPASSKA (144 aa). Residues 93-106 are compositionally biased toward low complexity; the sequence is SVASSSKTVSVASS. A compositionally biased stretch (polar residues) spans 116-129; the sequence is VSETMSNLQITSTE. A PAZ domain is found at 360–471; sequence VVTDFISKFL…LPMELCQIDE (112 aa). The Piwi domain maps to 638–958; the sequence is LLIVILPDVT…AAFRARYYME (321 aa). A divalent metal cation is bound by residues Asp-721 and Asp-807. 3 interaction with guide RNA regions span residues 847–848, 893–901, and 930–952; these read KR, HAGIQGTSR, and YARCTKSVSIVPPAYYAHLAAFR. His-947 provides a ligand contact to a divalent metal cation.

It belongs to the argonaute family. Ago subfamily. Requires Mg(2+) as cofactor. Mn(2+) serves as cofactor.

Its function is as follows. Involved in RNA-mediated post-transcriptional gene silencing (PTGS). Main component of the RNA-induced silencing complex (RISC) that binds to a short guide RNA such as a microRNA (miRNA) or small interfering RNA (siRNA). RISC uses the mature miRNA or siRNA as a guide for slicer-directed cleavage of homologous mRNAs to repress gene expression. Associates with siRNAs of various sizes, from 21-24 nucleotide in length and preferentially recruits small RNAs with a 5' terminal cytosine. Probably involved in antiviral RNA silencing. Associates with siRNAs derived from cucumber mosaic virus (CMV). Targeted by the turnip yellows virus (TuYV) protein P0 (via F-box-like domain) for probable proteasome degradation and thereby inactivating AGO5 function in RNA silencing. The polypeptide is Protein argonaute 5 (AGO5) (Arabidopsis thaliana (Mouse-ear cress)).